Reading from the N-terminus, the 256-residue chain is Thiazole synthase (256 aa).

The active-site Schiff-base intermediate with DXP is the K95. Residues G156, 182 to 183 (AG), and 204 to 205 (NT) contribute to the 1-deoxy-D-xylulose 5-phosphate site.

It belongs to the ThiG family. Homotetramer. Forms heterodimers with either ThiH or ThiS.

It localises to the cytoplasm. It catalyses the reaction [ThiS sulfur-carrier protein]-C-terminal-Gly-aminoethanethioate + 2-iminoacetate + 1-deoxy-D-xylulose 5-phosphate = [ThiS sulfur-carrier protein]-C-terminal Gly-Gly + 2-[(2R,5Z)-2-carboxy-4-methylthiazol-5(2H)-ylidene]ethyl phosphate + 2 H2O + H(+). The protein operates within cofactor biosynthesis; thiamine diphosphate biosynthesis. Its function is as follows. Catalyzes the rearrangement of 1-deoxy-D-xylulose 5-phosphate (DXP) to produce the thiazole phosphate moiety of thiamine. Sulfur is provided by the thiocarboxylate moiety of the carrier protein ThiS. In vitro, sulfur can be provided by H(2)S. In Salmonella agona (strain SL483), this protein is Thiazole synthase.